The sequence spans 167 residues: Phospholipase A2 heteromtoxin (167 aa).

The Ca(2+) site is built by W38, G40, and G42. 5 disulfides stabilise this stretch: C39/C61, C60/C99, C67/C92, C90/C127, and C132/C144. The active site involves H64. Residue D65 coordinates Ca(2+). Residues 136 to 140 (GRSAR) constitute a propeptide that is removed on maturation.

It belongs to the phospholipase A2 family. Group III subfamily. In terms of assembly, heterodimer composed of a large and a small subunits; disulfide-linked. It depends on Ca(2+) as a cofactor. As to expression, expressed by the venom gland.

It localises to the secreted. The catalysed reaction is a 1,2-diacyl-sn-glycero-3-phosphocholine + H2O = a 1-acyl-sn-glycero-3-phosphocholine + a fatty acid + H(+). Phospholipase toxin, which catalyzes the calcium-dependent hydrolysis of the 2-acyl groups in 3-sn-phosphoglycerides. Inhibits both skeletal (RYR1) and cardiac (RYR2) ryanodine receptors (calcium release channels). Probably blocks ryanodine receptors by generating a lipid product. In Heterometrus laoticus (Thai giant scorpion), this protein is Phospholipase A2 heteromtoxin.